Consider the following 362-residue polypeptide: Histidinol-phosphate aminotransferase (362 aa).

Lys218 bears the N6-(pyridoxal phosphate)lysine mark.

The protein belongs to the class-II pyridoxal-phosphate-dependent aminotransferase family. Histidinol-phosphate aminotransferase subfamily. As to quaternary structure, homodimer. The cofactor is pyridoxal 5'-phosphate.

It catalyses the reaction L-histidinol phosphate + 2-oxoglutarate = 3-(imidazol-4-yl)-2-oxopropyl phosphate + L-glutamate. It participates in amino-acid biosynthesis; L-histidine biosynthesis; L-histidine from 5-phospho-alpha-D-ribose 1-diphosphate: step 7/9. This chain is Histidinol-phosphate aminotransferase, found in Xanthomonas campestris pv. campestris (strain ATCC 33913 / DSM 3586 / NCPPB 528 / LMG 568 / P 25).